We begin with the raw amino-acid sequence, 604 residues long: Nuclear cap-binding protein subunit 3 (604 aa).

A disordered region spans residues 1–36 (MAAVRGLRISVKAEATATTAEPRGPEPEPMEVEEGE). The RNA recognition motif (RRM) domain stretch occupies residues 116 to 177 (DTIYICGVDE…MSSFPDQEKP (62 aa)). The short motif at 145 to 148 (WLDD) is the WLDD motif; essential for 7-methylguanosine-containing mRNA cap binding element. Disordered regions lie at residues 168–219 (MSSF…DIEL), 319–383 (KHRH…DSDE), and 457–604 (QNNN…DTES). The span at 173-198 (DQEKPKGGENNEEKTAEKNKKEKQEE) shows a compositional bias: basic and acidic residues. Acidic residues-rich tracts occupy residues 199–219 (STDD…DIEL) and 331–349 (EPIE…DEDD). Over residues 350-370 (RVVVEYRDDLQPFKQSRDRGA) the composition is skewed to basic and acidic residues. Residues 458–469 (NNNGLRQPNSIV) are compositionally biased toward polar residues. Composition is skewed to basic and acidic residues over residues 495-505 (PRREPISDVHS), 539-548 (TQEKTSDKPE), and 569-582 (IKEK…KSRL). A compositionally biased stretch (low complexity) spans 595 to 604 (ESSSGSDTES).

This sequence belongs to the NCBP3 family. In terms of assembly, component of an alternative cap-binding complex (CBC) composed of NCBP1/CBP80 and NCBP3.

The protein localises to the nucleus. It localises to the cytoplasm. Associates with NCBP1/CBP80 to form an alternative cap-binding complex (CBC) which plays a key role in mRNA export. NCBP3 serves as adapter protein linking the capped RNAs (m7GpppG-capped RNA) to NCBP1/CBP80. Unlike the conventional CBC with NCBP2 which binds both small nuclear RNA (snRNA) and messenger (mRNA) and is involved in their export from the nucleus, the alternative CBC with NCBP3 does not bind snRNA and associates only with mRNA thereby playing a role in only mRNA export. This is Nuclear cap-binding protein subunit 3 from Gallus gallus (Chicken).